A 195-amino-acid chain; its full sequence is Transmembrane protein 126A (195 aa).

Topologically, residues 1–33 (MENHKSNNKENITIVDISRKINQLPEAERNLLE) are mitochondrial matrix. Residues 34–54 (NGSVYVGLNAALCGLIANSLF) traverse the membrane as a helical segment. The Mitochondrial intermembrane portion of the chain corresponds to 55 to 56 (RR). Residues 57–77 (ILNVTKARIAAGLPMAGIPFL) traverse the membrane as a helical segment. Residues 78-110 (TTDLTYRCFVSFPLNTGDLDCETCTITRSGLTG) lie on the Mitochondrial matrix side of the membrane. The chain crosses the membrane as a helical span at residues 111–131 (LVIGGLYPVFLAIPVNGGLAA). Residues 132–158 (RYQSALLPHKGNILSYWIRTSKPVFRK) are Mitochondrial intermembrane-facing. A helical membrane pass occupies residues 159-175 (MLFPILLQTMFSAYLGS). At 176–195 (EQYKLLIKALQLSEPGKEIH) the chain is on the mitochondrial matrix side.

This sequence belongs to the TMEM126 family. In terms of assembly, interacts with OXA1L; promoting cotranslational quality control in mitochondria. In terms of tissue distribution, strongly expressed in brain, cerebellum, skeletal muscle, testis. High expression also found in fetal brain, fetal retinal pigmentary epithelium, and fetal retina. Highly expressed in retinal ganglion cells.

The protein resides in the mitochondrion inner membrane. Functionally, protein required for the cotranslational protein quality control in the inner membrane of the mitochondria. Associates with newly synthesized polypeptides and may act as a chaperone that cooperates with OXA1L for the insertion of newly synthesized mitochondrial proteins into the inner membrane. Required for the assembly of the ND4 module of mitochondrial complex I. This Homo sapiens (Human) protein is Transmembrane protein 126A.